The primary structure comprises 148 residues: uncharacterized protein (148 aa).

Residues Met1 to Gly18 form the signal peptide. Cys19 is lipidated: N-palmitoyl cysteine. Residue Cys19 is the site of S-diacylglycerol cysteine attachment.

It is found in the cell membrane. This is an uncharacterized protein from Bacillus subtilis (strain 168).